Reading from the N-terminus, the 296-residue chain is MNDAISLQFKVISGLYCELTGTTALETSLIGSGLDADIVFVEQGLAPHHFRVTLLGKTLEVEALAAGLSIEGNGNIAAGERVVAPLPVVIHAGAMSILWSVQDAASSGSIGKPRLSISVLALVLLGSLGIGVLSAIFSYYDNAVVSNADLSGEAREPKLPDNRTDDETAFTAAKALQQEVDRAGLSNIKISAAEGVVTVEGTVTSASAISWHKVQQWFDHRTRGALALLNGVIIDDEKAPSAIAVEAVWRGSLPYLVIKGEKYFVGALLDDGWMVERIEDGRVMLSRNGRLAAVPY.

A run of 2 helical transmembrane segments spans residues 82 to 102 (VVAP…WSVQ) and 117 to 137 (ISVL…SAIF).

The protein resides in the cell membrane. This is an uncharacterized protein from Sinorhizobium fredii (strain NBRC 101917 / NGR234).